The primary structure comprises 217 residues: MGAYRADDDYDYLFKLVLIGDSGVGKSNLLSRFTRNEFSIESKSTIGVEFATRSVHVDEKIIKAQLWDTAGQERYRAITSAYYRGAVGALLVYDITRHITFENVERWLKELRDHTDANVVIMLVGNKADLRHLRAVPTEEARSFSERENMFFMETSALDATNVEQAFTHVLTQIYRVMSRKALDGTGDPMSLPKGQTIDIGNKDDVTAVKSSGCCSG.

20–27 (GDSGVGKS) serves as a coordination point for GTP. Residues 42-50 (SKSTIGVEF) carry the Effector region motif. Residues 68 to 72 (DTAGQ), 126 to 129 (NKAD), and 156 to 157 (SA) contribute to the GTP site. Residues C214 and C215 are each lipidated (S-geranylgeranyl cysteine).

Belongs to the small GTPase superfamily. Rab family.

It localises to the cell membrane. Its function is as follows. Intracellular vesicle trafficking and protein transport. This is Ras-related protein RABA1e (RABA1E) from Arabidopsis thaliana (Mouse-ear cress).